Here is an 867-residue protein sequence, read N- to C-terminus: Piwi-like protein 1 (867 aa).

Residues 1-11 (MTGRARARARG) are compositionally biased toward basic residues. The disordered stretch occupies residues 1–70 (MTGRARARAR…QRGPQDAPKT (70 aa)). Polar residues predominate over residues 28–44 (AQKTLPSHPSEQRQSLQ). The PAZ domain occupies 286–397 (TVLDFMYSLY…LIPELCYLTG (112 aa)). Residues 324 to 326 (TYR) form a required for binding 2'-O-methylated 3'-end of piRNAs region. Residues 485 to 621 (SRETRVAPLI…LQMNCKMGGE (137 aa)) form an MID region region. In terms of domain architecture, Piwi spans 561–853 (IVVCILSSTR…LAFLVGQSIH (293 aa)). Active-site residues include D638, E676, D708, and H842.

It belongs to the argonaute family. Piwi subfamily. It depends on Mg(2+) as a cofactor. Post-translationally, methylated on arginine residues; required for the interaction with Tudor domain-containing protein and subsequent localization to the meiotic nuage, also named P granule.

The protein localises to the cytoplasm. Endoribonuclease that plays a central role in postnatal germ cells by repressing transposable elements and preventing their mobilization, which is essential for the germline integrity. Acts via the piRNA metabolic process, which mediates the repression of transposable elements during meiosis by forming complexes composed of piRNAs and Piwi proteins and govern the methylation and subsequent repression of transposons. Directly binds methylated piRNAs, a class of 24 to 30 nucleotide RNAs that are generated by a Dicer-independent mechanism and are primarily derived from transposons and other repeated sequence elements. Strongly prefers a uridine in the first position of their guide (g1U preference, also named 1U-bias). Besides their function in transposable elements repression, piRNAs are probably involved in other processes during meiosis such as translation regulation. Not involved in the piRNA amplification loop, also named ping-pong amplification cycle. Acts as an endoribonuclease that cleaves transposon messenger RNAs. This chain is Piwi-like protein 1 (PIWIL1), found in Gallus gallus (Chicken).